The sequence spans 341 residues: Glyceraldehyde-3-phosphate dehydrogenase 4 (341 aa).

NAD(+) is bound by residues 13–14 (RI), Asp-35, and Lys-85. Residues 157-159 (SCT), Thr-188, 217-218 (TG), and Arg-240 contribute to the D-glyceraldehyde 3-phosphate site. Cys-158 functions as the Nucleophile in the catalytic mechanism. NAD(+) is bound at residue Asn-322.

It belongs to the glyceraldehyde-3-phosphate dehydrogenase family. Homotetramer.

It localises to the cytoplasm. It catalyses the reaction D-glyceraldehyde 3-phosphate + phosphate + NAD(+) = (2R)-3-phospho-glyceroyl phosphate + NADH + H(+). The protein operates within carbohydrate degradation; glycolysis; pyruvate from D-glyceraldehyde 3-phosphate: step 1/5. This Caenorhabditis elegans protein is Glyceraldehyde-3-phosphate dehydrogenase 4 (gpd-4).